Consider the following 226-residue polypeptide: Respiratory nitrate reductase 2 gamma chain (226 aa).

Over 1-4 (MIQY) the chain is Periplasmic. The chain crosses the membrane as a helical span at residues 5–30 (LNVFFYDIYPYICATVFFLGSWLRYD). The Cytoplasmic portion of the chain corresponds to 31–48 (YGQYTWRASSSQMLDKRG). Residues 49-71 (MVIWSNLFHIGILGIFFGHLFGM) traverse the membrane as a helical segment. The heme b site is built by H57 and H67. Over 72-83 (LTPHWMYAWFLP) the chain is Periplasmic. Residues 84 to 113 (VAAKQLMAMVLGGICGVLTLIGGAGLLWRR) form a helical membrane-spanning segment. Residues 114–125 (LTNQRVRATSTT) are Cytoplasmic-facing. A helical membrane pass occupies residues 126–149 (PDIIIMSILLIQCLLGLSTIPFSA). At 150-183 (QYPDGSEMMKLVGWAQSIVTFRGGSSEMLNGVAF) the chain is on the periplasmic side. The chain crosses the membrane as a helical span at residues 184–199 (VFRLHLVLGMTIFLLF). Positions 188 and 206 each coordinate heme b. The Cytoplasmic segment spans residues 200 to 226 (PFTRLVHVWSAPFEYFTRRYQIVRSRR).

Dimer of heterotrimers each composed of an alpha, a beta and a gamma chain. Alpha and beta are catalytic chains; gamma chains are involved in binding the enzyme complex to the cytoplasmic membrane. It depends on heme as a cofactor.

It is found in the cell inner membrane. The catalysed reaction is nitrate + a quinol = a quinone + nitrite + H2O. Its function is as follows. This is a second nitrate reductase enzyme which can substitute for the NRA enzyme and allows E.coli to use nitrate as an electron acceptor during anaerobic growth. The gamma chain is a membrane-embedded heme-iron unit resembling cytochrome b, which transfers electrons from quinones to the beta subunit. This chain is Respiratory nitrate reductase 2 gamma chain (narV), found in Escherichia coli (strain K12).